A 521-amino-acid chain; its full sequence is Bifunctional dihydrofolate reductase-thymidylate synthase (521 aa).

The DHFR domain occupies 22–232; it reads AFSLVVAVDE…TKYYFEKLIP (211 aa). Substrate is bound at residue V26. Residues A28 and 34–40 each bind NADP(+); that span reads GIGDGRS. D48 provides a ligand contact to substrate. NADP(+) is bound by residues 78–80 and 99–102; these read RKT and LSST. I154, Y160, and T178 together coordinate substrate. Position 155 to 162 (155 to 162) interacts with NADP(+); it reads GGGSVYAE. A thymidylate synthase region spans residues 237–521; sequence EEQYLSLVDR…YPPISMKMAV (285 aa). A dUMP-binding site is contributed by R257. Residue C403 is part of the active site. DUMP contacts are provided by residues H404, 422–426, N434, and 464–466; these read QRSCD and HVY.

This sequence in the N-terminal section; belongs to the dihydrofolate reductase family. It in the C-terminal section; belongs to the thymidylate synthase family. In terms of assembly, homodimer.

The catalysed reaction is (6S)-5,6,7,8-tetrahydrofolate + NADP(+) = 7,8-dihydrofolate + NADPH + H(+). The enzyme catalyses dUMP + (6R)-5,10-methylene-5,6,7,8-tetrahydrofolate = 7,8-dihydrofolate + dTMP. It participates in cofactor biosynthesis; tetrahydrofolate biosynthesis; 5,6,7,8-tetrahydrofolate from 7,8-dihydrofolate: step 1/1. In terms of biological role, bifunctional enzyme. Involved in de novo dTMP biosynthesis. Key enzyme in folate metabolism. Catalyzes an essential reaction for de novo glycine and purine synthesis, DNA precursor synthesis, and for the conversion of dUMP to dTMP. The protein is Bifunctional dihydrofolate reductase-thymidylate synthase of Trypanosoma cruzi.